A 306-amino-acid chain; its full sequence is Glutaminase (306 aa).

Positions 61, 111, 157, 164, 188, 240, and 258 each coordinate substrate.

This sequence belongs to the glutaminase family. As to quaternary structure, homotetramer.

The catalysed reaction is L-glutamine + H2O = L-glutamate + NH4(+). This Psychrobacter cryohalolentis (strain ATCC BAA-1226 / DSM 17306 / VKM B-2378 / K5) protein is Glutaminase.